The primary structure comprises 316 residues: Galectin-8 (316 aa).

Galectin domains lie at Tyr18–Arg151 and Phe186–Trp316. A carbohydrate-binding residues include Arg68, Asn78, and Glu88. Trp248–Asn254 lines the a beta-D-galactoside pocket.

As to quaternary structure, homodimer. Interacts with CALCOCO2/NDP52. Interacts with PDPN; the interaction is glycosylation-dependent; may participate in connection of the lymphatic endothelium to the surrounding extracellular matrix. Expressed in liver, kidney, cardiac muscle, lung, and brain.

It localises to the cytoplasmic vesicle. It is found in the cytoplasm. The protein resides in the cytosol. Beta-galactoside-binding lectin that acts as a sensor of membrane damage caused by infection and restricts the proliferation of infecting pathogens by targeting them for autophagy. Detects membrane rupture by binding beta-galactoside ligands located on the lumenal side of the endosome membrane; these ligands becoming exposed to the cytoplasm following rupture. Restricts infection by initiating autophagy via interaction with CALCOCO2/NDP52. Required to restrict infection of bacterial invasion such as S.typhimurium. Also required to restrict infection of Picornaviridae viruses. Has a marked preference for 3'-O-sialylated and 3'-O-sulfated glycans. This chain is Galectin-8 (Lgals8), found in Rattus norvegicus (Rat).